The following is a 168-amino-acid chain: Protein-export protein SecB (168 aa).

The segment at 1-21 (MADQPSGNNDAKQAETNGNTV) is disordered.

It belongs to the SecB family. As to quaternary structure, homotetramer, a dimer of dimers. One homotetramer interacts with 1 SecA dimer.

The protein resides in the cytoplasm. One of the proteins required for the normal export of preproteins out of the cell cytoplasm. It is a molecular chaperone that binds to a subset of precursor proteins, maintaining them in a translocation-competent state. It also specifically binds to its receptor SecA. This is Protein-export protein SecB from Chelativorans sp. (strain BNC1).